We begin with the raw amino-acid sequence, 144 residues long: Deoxyuridine 5'-triphosphate nucleotidohydrolase (144 aa).

Residues serine 66, glycine 79, aspartate 82, tyrosine 85, lysine 90, arginine 134, phenylalanine 139, and glycine 140 each coordinate dUMP.

The protein belongs to the dUTPase family. In terms of assembly, homotrimer. Mg(2+) serves as cofactor.

The catalysed reaction is dUTP + H2O = dUMP + diphosphate + H(+). Its pathway is pyrimidine metabolism; dUMP biosynthesis; dUMP from dCTP (dUTP route): step 2/2. Its function is as follows. Involved in nucleotide metabolism via production of dUMP, the immediate precursor of thymidine nucleotides, and decreases the intracellular concentration of dUTP so that uracil cannot be incorporated into DNA. In Candida glabrata (strain ATCC 2001 / BCRC 20586 / JCM 3761 / NBRC 0622 / NRRL Y-65 / CBS 138) (Yeast), this protein is Deoxyuridine 5'-triphosphate nucleotidohydrolase (DUT1).